A 1367-amino-acid chain; its full sequence is Collagen alpha-1(XV) chain (1367 aa).

A signal peptide spans Met1–Ala31. One can recognise a Laminin G-like domain in the interval Ser54–Phe249. The segment at Arg229–Arg604 is nonhelical region 1 (NC1). Residues Ser243 and Ser247 are each glycosylated (O-linked (Xyl...) (chondroitin sulfate) serine). Residues Ala267 to Gly319 form a disordered region. Residues Asn305 and Asn323 are each glycosylated (N-linked (GlcNAc...) asparagine). O-linked (Xyl...) (chondroitin sulfate) serine glycosylation occurs at Ser341. N-linked (GlcNAc...) asparagine glycans are attached at residues Asn348, Asn375, and Asn402. 2 disordered regions span residues Asp396–Glu446 and Thr529–Glu784. Residues Asn402 to Gly429 show a composition bias toward polar residues. The span at Lys434 to Glu446 shows a compositional bias: basic and acidic residues. Residues Pro555 to Thr564 show a composition bias toward pro residues. Residues Gly582 to Asp595 are compositionally biased toward gly residues. Collagen-like domains follow at residues Gly605 to Gly665 and Glu666 to Pro717. The tract at residues Gly605–Gly718 is triple-helical region 1 (COL1). Over residues Pro606–Pro616 the composition is skewed to pro residues. N-linked (GlcNAc...) asparagine glycosylation occurs at Asn673. Over residues Met703–Pro717 the composition is skewed to pro residues. Residues Cys719 to Ser748 form a nonhelical region 2 (NC2) region. Ser730 carries an O-linked (Xyl...) (chondroitin sulfate) serine glycan. Over residues Ser737–Pro750 the composition is skewed to low complexity. The tract at residues Gly749–Val783 is triple-helical region 2 (COL2). Residues Lys751–Ala765 show a composition bias toward basic and acidic residues. The segment at Glu784–Met807 is nonhelical region 3 (NC3). Residues Asn792, Asn795, and Asn799 are each glycosylated (N-linked (GlcNAc...) asparagine). Collagen-like domains lie at Gly808–Gly850 and Lys863–Gly912. Residues Gly808–Ile852 are triple-helical region 3 (COL3). Positions Leu853 to Lys863 are nonhelical region 4 (NC4). Residues Gly864 to Val934 are triple-helical region 4 (COL4). The segment at Lys905–Pro930 is disordered. Residues Pro916–Pro930 show a composition bias toward pro residues. Positions Val935–His968 are nonhelical region 5 (NC5). Positions Gly969–Pro998 are triple-helical region 5 (COL5). 2 disordered regions span residues Lys974–Asp1000 and Gly1055–Leu1089. Residues Val999–Ser1031 are nonhelical region 6 (NC6). Residues Gly1032–Pro1086 are triple-helical region 6 (COL6). The segment covering Gly1055–Pro1086 has biased composition (pro residues). A nonhelical region 7 (NC7) region spans residues Ala1087–Pro1096. The segment at Gly1097 to Arg1111 is triple-helical region 7 (COL7). Residues Asn1112–Lys1367 are nonhelical region 8 (NC8). 2 cysteine pairs are disulfide-bonded: Cys1216–Cys1356 and Cys1318–Cys1348.

This sequence belongs to the multiplexin collagen family. Trimer; disulfide-linked. In terms of assembly, interacts moderately with EFEMP2. Post-translationally, prolines at the third position of the tripeptide repeating unit (G-X-Y) are hydroxylated in some or all of the chains. O-glycosylated; contains chondroitin sulfate. Detected in testis, brain, heart, kidney, skeletal muscle and skin (at protein level). Detected in heart and skeletal muscle.

The protein resides in the secreted. It is found in the extracellular space. It localises to the extracellular matrix. Functionally, structural protein that stabilizes microvessels and muscle cells, both in heart and in skeletal muscle. In terms of biological role, restin potently inhibits angiogenesis. The chain is Collagen alpha-1(XV) chain (Col15a1) from Mus musculus (Mouse).